The chain runs to 44 residues: Alpha-amylase inhibitor helianthamide (44 aa).

3 disulfides stabilise this stretch: Cys-6-Cys-38, Cys-16-Cys-33, and Cys-20-Cys-39. Positions 7-10 (YIYH) are inhibitory motif.

It belongs to the sea anemone alpha-amylase inhibitor family.

It is found in the secreted. In terms of biological role, specific pancreatic alpha-amylase (AMY2A) inhibitor. The recombinant peptide inhibits human pancreatic (Ki=0.01 nM) and porcine pancreatic alpha-amylases (Ki=0.1 nM). In Stichodactyla helianthus (Sun anemone), this protein is Alpha-amylase inhibitor helianthamide.